A 322-amino-acid polypeptide reads, in one-letter code: ADP,ATP carrier protein (322 aa).

3 Solcar repeats span residues S25–M118, K130–V222, and G230–L316. A run of 5 helical transmembrane segments spans residues F27–L54, T95–F119, Y128–L148, F198–L219, and L233–L253. R100 and K112 together coordinate ADP. R257 contacts ADP. The tract at residues R257 to M262 is important for transport activity. The Nucleotide carrier signature motif motif lies at R257–M262. The helical transmembrane segment at A293–V313 threads the bilayer.

This sequence belongs to the mitochondrial carrier (TC 2.A.29) family. Monomer.

It localises to the mitochondrion inner membrane. The catalysed reaction is ADP(in) + ATP(out) = ADP(out) + ATP(in). The matrix-open state (m-state) is inhibited by the membrane-permeable bongkrekic acid (BKA). The cytoplasmic-open state (c-state) is inhibited by the membrane-impermeable toxic inhibitor carboxyatractyloside (CATR). ADP:ATP antiporter that mediates import of ADP into the mitochondrial matrix for ATP synthesis, and export of ATP out to fuel the cell. Cycles between the cytoplasmic-open state (c-state) and the matrix-open state (m-state): operates by the alternating access mechanism with a single substrate-binding site intermittently exposed to either the cytosolic (c-state) or matrix (m-state) side of the inner mitochondrial membrane. The sequence is that of ADP,ATP carrier protein (anc1) from Schizosaccharomyces pombe (strain 972 / ATCC 24843) (Fission yeast).